The primary structure comprises 550 residues: Dipeptide-binding protein (550 aa).

The first 22 residues, 1–22 (MKQAKIIGLSTVIALSGIILVA), serve as a signal peptide directing secretion. C23 carries N-palmitoyl cysteine lipidation. Residue C23 is the site of S-diacylglycerol cysteine attachment.

This sequence belongs to the bacterial solute-binding protein 5 family. In terms of assembly, the complex is composed of two ATP-binding proteins (DppD and DppF), two transmembrane proteins (DppB and DppC) and a solute-binding protein (DppA).

The protein resides in the cell membrane. Functionally, part of the ABC transporter DppABCDF involved in dipeptide transport. Binds di- and tripeptides with high affinity. Requires a free N-terminal alpha-amino group and an alpha-peptide bound contiguous with the N-terminal amino group, has a strong selectivity for L-residues, and shows preference for dipeptides containing methionine or arginine, followed by hydrophobic tripeptides consisting of leucine or valine residues. The protein is Dipeptide-binding protein of Lactococcus lactis subsp. cremoris (strain MG1363).